The chain runs to 354 residues: S-adenosylmethionine:tRNA ribosyltransferase-isomerase (354 aa).

Belongs to the QueA family. Monomer.

Its subcellular location is the cytoplasm. It carries out the reaction 7-aminomethyl-7-carbaguanosine(34) in tRNA + S-adenosyl-L-methionine = epoxyqueuosine(34) in tRNA + adenine + L-methionine + 2 H(+). It functions in the pathway tRNA modification; tRNA-queuosine biosynthesis. In terms of biological role, transfers and isomerizes the ribose moiety from AdoMet to the 7-aminomethyl group of 7-deazaguanine (preQ1-tRNA) to give epoxyqueuosine (oQ-tRNA). In Thermosynechococcus vestitus (strain NIES-2133 / IAM M-273 / BP-1), this protein is S-adenosylmethionine:tRNA ribosyltransferase-isomerase.